The primary structure comprises 466 residues: Delta-1 crystallin (466 aa).

A2 is modified (blocked amino end (Ala)).

It belongs to the lyase 1 family. Argininosuccinate lyase subfamily. As to quaternary structure, homotetramer. The N-terminus is blocked. In terms of tissue distribution, eye lens.

Its function is as follows. Delta crystallin, the principal crystallin in embryonic lens, is found only in birds and reptiles. The chain is Delta-1 crystallin (ASL1) from Gallus gallus (Chicken).